Consider the following 469-residue polypeptide: Neuraminidase (469 aa).

Residues 1 to 9 are Intravirion-facing; sequence MNPNQKIIT. The chain crosses the membrane as a helical span at residues 10–30; the sequence is IGSVSLTIATVCFLMQIAILV. Residues 11-33 are involved in apical transport and lipid raft association; sequence GSVSLTIATVCFLMQIAILVTTV. At 31 to 469 the chain is on the virion surface side; sequence TTVTLHFKQH…DGANINFMPI (439 aa). Residues 36-88 are hypervariable stalk region; the sequence is HFKQHECDSPASNQVMPCEPIIIERNITEIVYLNNTTIEKEICPKVVEYRNWS. Residues asparagine 61, asparagine 69, asparagine 70, and asparagine 86 are each glycosylated (N-linked (GlcNAc...) asparagine; by host). The head of neuraminidase stretch occupies residues 91–469; the sequence is QCQITGFAPF…DGANINFMPI (379 aa). Intrachain disulfides connect cysteine 92-cysteine 417, cysteine 124-cysteine 129, cysteine 175-cysteine 193, cysteine 183-cysteine 230, cysteine 232-cysteine 237, cysteine 278-cysteine 291, cysteine 280-cysteine 289, cysteine 318-cysteine 337, and cysteine 421-cysteine 447. Residue arginine 118 coordinates substrate. Asparagine 146 carries an N-linked (GlcNAc...) asparagine; by host glycan. Aspartate 151 functions as the Proton donor/acceptor in the catalytic mechanism. Residue arginine 152 coordinates substrate. Residues asparagine 200 and asparagine 234 are each glycosylated (N-linked (GlcNAc...) asparagine; by host). 276 to 277 serves as a coordination point for substrate; sequence EE. Arginine 292 is a binding site for substrate. Residues aspartate 293, glycine 297, and aspartate 324 each coordinate Ca(2+). A disordered region spans residues 324–349; that stretch reads DTPRNDDRSSNSNCRNPNNERGTQGV. Positions 333 to 342 are enriched in low complexity; that stretch reads SNSNCRNPNN. 3 residues coordinate Ca(2+): glycine 345, threonine 346, and glutamine 347. Arginine 371 is a substrate binding site. Asparagine 402 is a glycosylation site (N-linked (GlcNAc...) asparagine; by host). The active-site Nucleophile is tyrosine 406.

It belongs to the glycosyl hydrolase 34 family. As to quaternary structure, homotetramer. The cofactor is Ca(2+). Post-translationally, N-glycosylated.

It is found in the virion membrane. The protein resides in the host apical cell membrane. The enzyme catalyses Hydrolysis of alpha-(2-&gt;3)-, alpha-(2-&gt;6)-, alpha-(2-&gt;8)- glycosidic linkages of terminal sialic acid residues in oligosaccharides, glycoproteins, glycolipids, colominic acid and synthetic substrates.. With respect to regulation, inhibited by the neuraminidase inhibitors zanamivir (Relenza) and oseltamivir (Tamiflu). These drugs interfere with the release of progeny virus from infected cells and are effective against all influenza strains. Resistance to neuraminidase inhibitors is quite rare. In terms of biological role, catalyzes the removal of terminal sialic acid residues from viral and cellular glycoconjugates. Cleaves off the terminal sialic acids on the glycosylated HA during virus budding to facilitate virus release. Additionally helps virus spread through the circulation by further removing sialic acids from the cell surface. These cleavages prevent self-aggregation and ensure the efficient spread of the progeny virus from cell to cell. Otherwise, infection would be limited to one round of replication. Described as a receptor-destroying enzyme because it cleaves a terminal sialic acid from the cellular receptors. May facilitate viral invasion of the upper airways by cleaving the sialic acid moieties on the mucin of the airway epithelial cells. Likely to plays a role in the budding process through its association with lipid rafts during intracellular transport. May additionally display a raft-association independent effect on budding. Plays a role in the determination of host range restriction on replication and virulence. Sialidase activity in late endosome/lysosome traffic seems to enhance virus replication. This Aves (Human) protein is Neuraminidase.